The sequence spans 209 residues: Imidazoleglycerol-phosphate dehydratase (209 aa).

The protein belongs to the imidazoleglycerol-phosphate dehydratase family.

The protein localises to the cytoplasm. The catalysed reaction is D-erythro-1-(imidazol-4-yl)glycerol 3-phosphate = 3-(imidazol-4-yl)-2-oxopropyl phosphate + H2O. It functions in the pathway amino-acid biosynthesis; L-histidine biosynthesis; L-histidine from 5-phospho-alpha-D-ribose 1-diphosphate: step 6/9. This chain is Imidazoleglycerol-phosphate dehydratase, found in Nostoc sp. (strain PCC 7120 / SAG 25.82 / UTEX 2576).